The chain runs to 375 residues: tRNA-specific 2-thiouridylase MnmA (375 aa).

ATP is bound by residues 16–23 (GMSGGVDS) and M42. Residues 102-104 (NPD) are interaction with target base in tRNA. C107 serves as the catalytic Nucleophile. Residues C107 and C203 are joined by a disulfide bond. An ATP-binding site is contributed by G131. The segment at 153 to 155 (KDQ) is interaction with tRNA. The Cysteine persulfide intermediate role is filled by C203. Residues 315–316 (RY) are interaction with tRNA.

The protein belongs to the MnmA/TRMU family.

The protein localises to the cytoplasm. The enzyme catalyses S-sulfanyl-L-cysteinyl-[protein] + uridine(34) in tRNA + AH2 + ATP = 2-thiouridine(34) in tRNA + L-cysteinyl-[protein] + A + AMP + diphosphate + H(+). In terms of biological role, catalyzes the 2-thiolation of uridine at the wobble position (U34) of tRNA, leading to the formation of s(2)U34. The polypeptide is tRNA-specific 2-thiouridylase MnmA (Pseudomonas aeruginosa (strain LESB58)).